Consider the following 707-residue polypeptide: GDNF-inducible zinc finger protein 1 (707 aa).

The region spanning 31–103 (CDVTVIVDYQ…VYTARVRVKE (73 aa)) is the BTB domain. Polar residues predominate over residues 149–165 (VEASSGPQVSVTPSSKA). 2 disordered regions span residues 149–221 (VEAS…PKIR) and 243–309 (RRLR…KDGE). Basic and acidic residues-rich tracts occupy residues 198–213 (PSKK…KDVA), 243–278 (RRLR…EPAS), and 287–298 (VEREESLQKVEG). C2H2-type zinc fingers lie at residues 316–338 (FQCT…IKYH), 347–370 (YRCD…RHVH), 376–399 (FPCE…LQVH), 406–428 (HRCG…ERTH), 434–456 (YGCT…LRVH), 462–484 (FVCD…KRCH), 490–512 (FMCE…NRIH), 518–540 (FKCE…IKVH), 546–568 (YCCD…HRIH), and 574–596 (YMCN…TSIH). A Phosphoserine modification is found at Ser612.

The protein belongs to the krueppel C2H2-type zinc-finger protein family. In terms of assembly, interacts with NCL.

The protein localises to the cytoplasm. The protein resides in the nucleus. It localises to the nucleoplasm. Its subcellular location is the nucleolus. Transcriptional repressor that binds the GZF1 responsive element (GRE) (consensus: 5'-TGCGCN[TG][CA]TATA-3'). May be regulating VSX2/HOX10 expression. This is GDNF-inducible zinc finger protein 1 (Gzf1) from Rattus norvegicus (Rat).